The chain runs to 204 residues: Isochorismatase domain-containing protein 2 (204 aa).

It belongs to the isochorismatase family. Interacts with CDKN2A.

Its subcellular location is the cytoplasm. It localises to the nucleus. This chain is Isochorismatase domain-containing protein 2 (ISOC2), found in Bos taurus (Bovine).